We begin with the raw amino-acid sequence, 341 residues long: MPKPNHSTAPLPFPILIGDIGGTNARFSILTDAYAEPKQFPNVRTADFATIDEAIQKGVLDKTAVQPRSAILAVAGPINDDEIPLTNCDWVVRPKTMIEGLGIEDVLVVNDFEAQALAVAALSDENRERIGDATGDMIASRVVLGPGTGLGVGGLVHAQHSWIPVPGEGGHVDLGPRSKRDYQLFPHIETIESRVSAEQILCGRGLVNLYNAICIVDGIQPTMKDPADITSHALAGSDKAAVETVSLFATYLGRVAGDMAMVFMARGGVYLSGGISQKILPALKKPEFRMAFEDKAPHTALLRTIPTYVVTHPLAALAGLSSYARMPANFGVSTEGRRWRR.

Position 18–23 (glycine 18–threonine 23) interacts with ATP.

This sequence belongs to the bacterial glucokinase family.

It is found in the cytoplasm. It catalyses the reaction D-glucose + ATP = D-glucose 6-phosphate + ADP + H(+). The chain is Glucokinase from Rhizobium etli (strain CIAT 652).